Here is a 440-residue protein sequence, read N- to C-terminus: MLITNPALLGILASLVPLALGAPNQPIQARSRKCVIPSSYASSHGTADDSPAVASAFAQCAENSVIVFQEGVDYNIFHPIKATNLSNVEIRVLGNLHLPQDITAVQNIVKSGQSTWFTFQGPRVDWTGADDIKNGWINSYGQAWWDANPANSSSFPNRPHLMSYKTSQASIKNFRSRKPIAWNVKLQGDDITVSHAIVDATSTGGFPFNTDGFDVEGTNISITDSVMFNGDDAIAVNTPSHNIVFARNTIGYQSHGMSIGSLGKDPTDFANITNLRFEDVTVIDALYAARFKSWSGGRGLVKNVVWKNIRTFNVTFPIFVTQSYSDQSASRSGTIDPFSSVMMEDFTWSDFSGTINTYHPGDGSCVTDPCWYNVGLPNLKHTEAIVLECNTESSCKNFRTEGIRLHPQSKDSPSVICMKATAELNPKLGFECKNGTFVPH.

An N-terminal signal peptide occupies residues 1–21 (MLITNPALLGILASLVPLALG). N-linked (GlcNAc...) asparagine glycans are attached at residues asparagine 84 and asparagine 151. PbH1 repeat units follow at residues 188 to 210 (GDDI…PFNT), 217 to 238 (GTNI…AVNT), and 240 to 261 (SHNI…SIGS). A glycan (N-linked (GlcNAc...) asparagine) is linked at asparagine 219. Aspartate 231 acts as the Proton donor in catalysis. Histidine 255 is a catalytic residue. Asparagine 271 carries N-linked (GlcNAc...) asparagine glycosylation. One copy of the PbH1 4 repeat lies at 272 to 293 (ITNLRFEDVTVIDALYAARFKS). A glycan (N-linked (GlcNAc...) asparagine) is linked at asparagine 313. Cysteines 389 and 395 form a disulfide. Asparagine 434 is a glycosylation site (N-linked (GlcNAc...) asparagine).

Belongs to the glycosyl hydrolase 28 family.

It localises to the secreted. It carries out the reaction [(1-&gt;4)-alpha-D-galacturonosyl](n) + H2O = alpha-D-galacturonate + [(1-&gt;4)-alpha-D-galacturonosyl](n-1). Functionally, specific in hydrolyzing the terminal glycosidic bond of polygalacturonic acid and oligogalacturonates. The sequence is that of Probable exopolygalacturonase C (pgxC) from Aspergillus fumigatus (strain ATCC MYA-4609 / CBS 101355 / FGSC A1100 / Af293) (Neosartorya fumigata).